The chain runs to 890 residues: Alanine--tRNA ligase (890 aa).

H569, H573, C671, and H675 together coordinate Zn(2+).

The protein belongs to the class-II aminoacyl-tRNA synthetase family. The cofactor is Zn(2+).

The protein resides in the cytoplasm. It carries out the reaction tRNA(Ala) + L-alanine + ATP = L-alanyl-tRNA(Ala) + AMP + diphosphate. Its function is as follows. Catalyzes the attachment of alanine to tRNA(Ala) in a two-step reaction: alanine is first activated by ATP to form Ala-AMP and then transferred to the acceptor end of tRNA(Ala). Also edits incorrectly charged Ser-tRNA(Ala) and Gly-tRNA(Ala) via its editing domain. This is Alanine--tRNA ligase from Synechococcus sp. (strain CC9902).